The chain runs to 156 residues: MNVIEAAVATPDARVALVIARFNNFINDSLLSGALDALKRIGQVKDENITVVWVPGAYELPVTARALAKTGKHDAVVALGTVIRGGTAHFEFVAGEASSGLASVAMHSDIPVAFGVLTTENIEQAIERAGTKAGNKGAEAALTALEMINVLKAINA.

Residues Phe-22, 57–59, and 81–83 each bind 5-amino-6-(D-ribitylamino)uracil; these read AYE and TVI. 86–87 is a binding site for (2S)-2-hydroxy-3-oxobutyl phosphate; it reads GT. His-89 acts as the Proton donor in catalysis. 5-amino-6-(D-ribitylamino)uracil is bound at residue Phe-114. Arg-128 is a (2S)-2-hydroxy-3-oxobutyl phosphate binding site.

Belongs to the DMRL synthase family. In terms of assembly, forms an icosahedral capsid composed of 60 subunits, arranged as a dodecamer of pentamers.

The enzyme catalyses (2S)-2-hydroxy-3-oxobutyl phosphate + 5-amino-6-(D-ribitylamino)uracil = 6,7-dimethyl-8-(1-D-ribityl)lumazine + phosphate + 2 H2O + H(+). It participates in cofactor biosynthesis; riboflavin biosynthesis; riboflavin from 2-hydroxy-3-oxobutyl phosphate and 5-amino-6-(D-ribitylamino)uracil: step 1/2. Its function is as follows. Catalyzes the formation of 6,7-dimethyl-8-ribityllumazine by condensation of 5-amino-6-(D-ribitylamino)uracil with 3,4-dihydroxy-2-butanone 4-phosphate. This is the penultimate step in the biosynthesis of riboflavin. This chain is 6,7-dimethyl-8-ribityllumazine synthase, found in Erwinia tasmaniensis (strain DSM 17950 / CFBP 7177 / CIP 109463 / NCPPB 4357 / Et1/99).